We begin with the raw amino-acid sequence, 202 residues long: Large ribosomal subunit protein bL25 (202 aa).

This sequence belongs to the bacterial ribosomal protein bL25 family. CTC subfamily. Part of the 50S ribosomal subunit; part of the 5S rRNA/L5/L18/L25 subcomplex. Contacts the 5S rRNA. Binds to the 5S rRNA independently of L5 and L18.

Its function is as follows. This is one of the proteins that binds to the 5S RNA in the ribosome where it forms part of the central protuberance. The polypeptide is Large ribosomal subunit protein bL25 (Nitrosomonas eutropha (strain DSM 101675 / C91 / Nm57)).